The following is a 156-amino-acid chain: Small ribosomal subunit protein uS7 (156 aa).

Belongs to the universal ribosomal protein uS7 family. As to quaternary structure, part of the 30S ribosomal subunit. Contacts proteins S9 and S11.

Its function is as follows. One of the primary rRNA binding proteins, it binds directly to 16S rRNA where it nucleates assembly of the head domain of the 30S subunit. Is located at the subunit interface close to the decoding center, probably blocks exit of the E-site tRNA. In Lactobacillus helveticus (strain DPC 4571), this protein is Small ribosomal subunit protein uS7.